A 224-amino-acid polypeptide reads, in one-letter code: Uracil-DNA glycosylase (224 aa).

The active-site Proton acceptor is D62.

This sequence belongs to the uracil-DNA glycosylase (UDG) superfamily. UNG family.

The protein resides in the cytoplasm. It catalyses the reaction Hydrolyzes single-stranded DNA or mismatched double-stranded DNA and polynucleotides, releasing free uracil.. Functionally, excises uracil residues from the DNA which can arise as a result of misincorporation of dUMP residues by DNA polymerase or due to deamination of cytosine. This is Uracil-DNA glycosylase from Aliivibrio fischeri (strain ATCC 700601 / ES114) (Vibrio fischeri).